Here is a 300-residue protein sequence, read N- to C-terminus: F-box/LRR-repeat protein 15 (300 aa).

Methionine 1 is modified (N-acetylmethionine). The 48-residue stretch at 19 to 66 (FLDLPWEDVLLPHVLNRVPLRQLLRLQRVSRAFRSLVQLHLAGLRRFD) folds into the F-box domain. An interaction with SMURF1 region spans residues 113 to 269 (NPQLRSVALG…ESSLSRLRKR (157 aa)). LRR repeat units lie at residues 141–162 (RLQR…RGLA), 167–188 (ALEE…VYLA), 194–215 (GLRS…QELA), 220–241 (ELHH…RTLA), and 246–267 (VLRS…SRLR).

This sequence belongs to the FBXL15 family. As to quaternary structure, part of the SCF (SKP1-CUL1-F-box) E3 ubiquitin-protein ligase complex SCF(FBXL15) composed of CUL1, SKP1, RBX1 and FBXL15.

Its subcellular location is the cytoplasm. It participates in protein modification; protein ubiquitination. Its function is as follows. Substrate recognition component of a SCF (SKP1-CUL1-F-box protein) E3 ubiquitin-protein ligase complex which mediates the ubiquitination and subsequent proteasomal degradation of SMURF1, thereby acting as a positive regulator of the BMP signaling pathway. Required for dorsal/ventral pattern formation and bone mass maintenance. Also mediates ubiquitination of SMURF2 and WWP2. The protein is F-box/LRR-repeat protein 15 (FBXL15) of Homo sapiens (Human).